A 79-amino-acid polypeptide reads, in one-letter code: Conotoxin Vi6.4 (79 aa).

The first 22 residues, 1 to 22 (MKLTCVLIITVLFLTASQLITA), serve as a signal peptide directing secretion. The propeptide occupies 23–47 (DYSGDKRQYRAVRLRDEMRNFKGAR). 3 disulfides stabilise this stretch: Cys49–Cys62, Cys56–Cys67, and Cys61–Cys77. A 4-hydroxyproline mark is found at Pro60 and Pro63.

This sequence belongs to the conotoxin O1 superfamily. In terms of tissue distribution, expressed by the venom duct.

Its subcellular location is the secreted. In terms of biological role, ion channel inhibitor that inhibits the increase in intracellular calcium upon depolarization in DRG neurons. In vivo, both intraperitoneal and intracranial injections into mice induce hyperactivity. This is Conotoxin Vi6.4 from Conus virgo (Virgin cone).